Reading from the N-terminus, the 493-residue chain is Ribosomal protein uS12 methylthiotransferase RimO (493 aa).

One can recognise an MTTase N-terminal domain in the interval 5-121 (RTVALVTLGC…ISDRLQTILN (117 aa)). [4Fe-4S] cluster-binding residues include Cys-14, Cys-50, and Cys-84. Residues 153-177 (LPGHGPTDLPEGVAPASGPRAPLRR) form a disordered region. The Radical SAM core domain maps to 179–410 (LDGSPVASVK…RLAEELVSQR (232 aa)). Positions 193, 197, and 200 each coordinate [4Fe-4S] cluster. One can recognise a TRAM domain in the interval 412–482 (DERVGATVRV…GVDLVAEPLL (71 aa)).

The protein belongs to the methylthiotransferase family. RimO subfamily. Requires [4Fe-4S] cluster as cofactor.

The protein resides in the cytoplasm. It catalyses the reaction L-aspartate(89)-[ribosomal protein uS12]-hydrogen + (sulfur carrier)-SH + AH2 + 2 S-adenosyl-L-methionine = 3-methylsulfanyl-L-aspartate(89)-[ribosomal protein uS12]-hydrogen + (sulfur carrier)-H + 5'-deoxyadenosine + L-methionine + A + S-adenosyl-L-homocysteine + 2 H(+). Catalyzes the methylthiolation of an aspartic acid residue of ribosomal protein uS12. In Streptomyces coelicolor (strain ATCC BAA-471 / A3(2) / M145), this protein is Ribosomal protein uS12 methylthiotransferase RimO.